Reading from the N-terminus, the 120-residue chain is Glycine cleavage system H protein (120 aa).

Residues 19–101 (DGTVGISDFA…YTDGWLFRLD (83 aa)) form the Lipoyl-binding domain. N6-lipoyllysine is present on lysine 60.

It belongs to the GcvH family. The glycine cleavage system is composed of four proteins: P, T, L and H. The cofactor is (R)-lipoate.

The glycine cleavage system catalyzes the degradation of glycine. The H protein shuttles the methylamine group of glycine from the P protein to the T protein. This Deinococcus geothermalis (strain DSM 11300 / CIP 105573 / AG-3a) protein is Glycine cleavage system H protein.